The sequence spans 510 residues: ATP synthase subunit alpha, mitochondrial (510 aa).

171–178 (GDRQTGKT) is an ATP binding site.

The protein belongs to the ATPase alpha/beta chains family. F-type ATPases have 2 components, CF(1) - the catalytic core - and CF(0) - the membrane proton channel. CF(1) has five subunits: alpha(3), beta(3), gamma(1), delta(1), epsilon(1). CF(0) has three main subunits: a, b and c.

It localises to the mitochondrion. The protein resides in the mitochondrion inner membrane. Its function is as follows. Mitochondrial membrane ATP synthase (F(1)F(0) ATP synthase or Complex V) produces ATP from ADP in the presence of a proton gradient across the membrane which is generated by electron transport complexes of the respiratory chain. F-type ATPases consist of two structural domains, F(1) - containing the extramembraneous catalytic core, and F(0) - containing the membrane proton channel, linked together by a central stalk and a peripheral stalk. During catalysis, ATP synthesis in the catalytic domain of F(1) is coupled via a rotary mechanism of the central stalk subunits to proton translocation. Subunits alpha and beta form the catalytic core in F(1). Rotation of the central stalk against the surrounding alpha(3)beta(3) subunits leads to hydrolysis of ATP in three separate catalytic sites on the beta subunits. Subunit alpha does not bear the catalytic high-affinity ATP-binding sites. The sequence is that of ATP synthase subunit alpha, mitochondrial (ATPA) from Helianthus annuus (Common sunflower).